Reading from the N-terminus, the 95-residue chain is uncharacterized protein (95 aa).

Residues 12 to 32 form a helical membrane-spanning segment; sequence IASLVVSVVVLLIGLILWFFI.

The protein resides in the cell membrane. This is an uncharacterized protein from Escherichia coli O157:H7.